Here is a 350-residue protein sequence, read N- to C-terminus: Biotin synthase (350 aa).

A Radical SAM core domain is found at 38-256; it reads NYVQVSTLLS…IAIARIMMPQ (219 aa). Residues Cys-53, Cys-57, and Cys-60 each coordinate [4Fe-4S] cluster. [2Fe-2S] cluster-binding residues include Cys-97, Cys-128, Cys-188, and Arg-260.

This sequence belongs to the radical SAM superfamily. Biotin synthase family. As to quaternary structure, homodimer. It depends on [4Fe-4S] cluster as a cofactor. [2Fe-2S] cluster serves as cofactor.

The catalysed reaction is (4R,5S)-dethiobiotin + (sulfur carrier)-SH + 2 reduced [2Fe-2S]-[ferredoxin] + 2 S-adenosyl-L-methionine = (sulfur carrier)-H + biotin + 2 5'-deoxyadenosine + 2 L-methionine + 2 oxidized [2Fe-2S]-[ferredoxin]. Its pathway is cofactor biosynthesis; biotin biosynthesis; biotin from 7,8-diaminononanoate: step 2/2. Catalyzes the conversion of dethiobiotin (DTB) to biotin by the insertion of a sulfur atom into dethiobiotin via a radical-based mechanism. This is Biotin synthase from Vibrio campbellii (strain ATCC BAA-1116).